Reading from the N-terminus, the 201-residue chain is Small ribosomal subunit protein uS4 (201 aa).

In terms of domain architecture, S4 RNA-binding spans 92-155; that stretch reads ARLDNVVFRL…KSLEVIANSL (64 aa).

It belongs to the universal ribosomal protein uS4 family. Part of the 30S ribosomal subunit. Contacts protein S5. The interaction surface between S4 and S5 is involved in control of translational fidelity.

Functionally, one of the primary rRNA binding proteins, it binds directly to 16S rRNA where it nucleates assembly of the body of the 30S subunit. Its function is as follows. With S5 and S12 plays an important role in translational accuracy. This is Small ribosomal subunit protein uS4 from Phocaeicola vulgatus (strain ATCC 8482 / DSM 1447 / JCM 5826 / CCUG 4940 / NBRC 14291 / NCTC 11154) (Bacteroides vulgatus).